Here is a 141-residue protein sequence, read N- to C-terminus: Nucleoside diphosphate kinase (141 aa).

6 residues coordinate ATP: K11, F59, R87, T93, R104, and N114. H117 serves as the catalytic Pros-phosphohistidine intermediate.

It belongs to the NDK family. In terms of assembly, homotetramer. It depends on Mg(2+) as a cofactor.

It localises to the cytoplasm. It catalyses the reaction a 2'-deoxyribonucleoside 5'-diphosphate + ATP = a 2'-deoxyribonucleoside 5'-triphosphate + ADP. The enzyme catalyses a ribonucleoside 5'-diphosphate + ATP = a ribonucleoside 5'-triphosphate + ADP. Functionally, major role in the synthesis of nucleoside triphosphates other than ATP. The ATP gamma phosphate is transferred to the NDP beta phosphate via a ping-pong mechanism, using a phosphorylated active-site intermediate. This is Nucleoside diphosphate kinase from Yersinia enterocolitica serotype O:8 / biotype 1B (strain NCTC 13174 / 8081).